The following is a 344-amino-acid chain: Selenide, water dikinase (344 aa).

Residue Cys16 is part of the active site. ATP is bound by residues Lys19 and 47-49; that span reads SRD. Asp50 lines the Mg(2+) pocket. ATP contacts are provided by residues Asp67, Asp90, and 138–140; that span reads GHS. Asp90 is a binding site for Mg(2+). A Mg(2+)-binding site is contributed by Asp226.

It belongs to the selenophosphate synthase 1 family. Class I subfamily. In terms of assembly, homodimer. Requires Mg(2+) as cofactor.

It carries out the reaction hydrogenselenide + ATP + H2O = selenophosphate + AMP + phosphate + 2 H(+). In terms of biological role, synthesizes selenophosphate from selenide and ATP. This chain is Selenide, water dikinase, found in Pseudomonas aeruginosa (strain ATCC 15692 / DSM 22644 / CIP 104116 / JCM 14847 / LMG 12228 / 1C / PRS 101 / PAO1).